The following is a 357-amino-acid chain: Protein BMRF2 (357 aa).

Topologically, residues 1–11 are virion surface; that stretch reads MFSCKQHLSLG. Residues 12 to 32 are membrane-embedded; sequence ACVFCLGLLASTPFIWCFVFA. The Virion surface portion of the chain corresponds to 33–46; that stretch reads NLLSLEIFSPWQTH. The chain crosses the lipid bilayer at residues 47-67; sequence VYRLGFPTACLMAVLWTLVPA. The Virion surface segment spans residues 68-70; that stretch reads KHA. Positions 71–91 form a transmembrane segment; sequence VRAVTPAIMLNIASALIFFSL. The Virion surface portion of the chain corresponds to 92-98; the sequence is RVYSTST. A membrane pass occupies residues 99-121; it reads WVSAPCLFLANLPLLCLWPRLAI. Over 122–133 the chain is Virion surface; it reads EIVYICPAIHQR. Positions 134-154 form a transmembrane segment; sequence FFELGLLLACTIFALSVVSRA. Residues 155-158 are Virion surface-facing; sequence LEVS. A transmembrane span lies at residues 159–179; that stretch reads AVFMSPFFIFLALGSGSLAGA. Residues 180-217 lie on the Virion surface side of the membrane; sequence RRNQIYTSGLERRRSIFCARGDHSVASLKETLHKCPWD. The Integrin binding site signature appears at 199–201; that stretch reads RGD. A membrane pass occupies residues 218 to 238; that stretch reads LLAISALTVLVVCVMIVLHVH. Residues 239–240 lie on the Virion surface side of the membrane; the sequence is AE. At 241–261 the chain is embedded in the membrane; sequence VFFGLSRYLPLFLCGAMASGG. Over 262–267 the chain is Virion surface; that stretch reads LYLGHS. A transmembrane helix spans residues 268-288; sequence SIIACVMATLCTLTSVVVYFL. Residues 289-298 are Virion surface-facing; the sequence is HETLGPLGKT. Over 299 to 319 the chain traverses the membrane; the sequence is VLFISIFVYYFSGVAALSAAM. Residues 320-335 lie on the Virion surface side of the membrane; that stretch reads RYKLKKFVNGPLVHLR. Positions 336–356 form a transmembrane segment; it reads VVYMCCFVFTFCEYLLVTFIK. Ser357 is a topological domain (virion surface).

The protein belongs to the herpesviridae BMRF2 family. As to quaternary structure, interacts with BDLF2. Interacts with host beta1 integrin family. Extensively glycosylated by O-linked oligosaccharides.

Its subcellular location is the virion membrane. It is found in the host cell membrane. Facilitates virus attachment to oral epithelial cells by binding to host beta1 integrin family. Participates in rearrangement of cellular actin to increase intercellular contacts by binding BDLF2 and thereby promote virus cell-to-cell spreading. The protein is Protein BMRF2 of Homo sapiens (Human).